The sequence spans 98 residues: MTLIHMNILMAFSMSLVGLLMYRSHLMSALLCLEGMMLSLFVLATLTILSSHFTLANMMPIILLVFAACEAAIGLALLVMVSNTYGTDYVQSLNLLQC.

3 helical membrane passes run 1 to 21, 29 to 49, and 61 to 81; these read MTLIHMNILMAFSMSLVGLLM, ALLCLEGMMLSLFVLATLTIL, and IILLVFAACEAAIGLALLVMV.

It belongs to the complex I subunit 4L family. As to quaternary structure, core subunit of respiratory chain NADH dehydrogenase (Complex I) which is composed of 45 different subunits.

Its subcellular location is the mitochondrion inner membrane. The enzyme catalyses a ubiquinone + NADH + 5 H(+)(in) = a ubiquinol + NAD(+) + 4 H(+)(out). Functionally, core subunit of the mitochondrial membrane respiratory chain NADH dehydrogenase (Complex I) which catalyzes electron transfer from NADH through the respiratory chain, using ubiquinone as an electron acceptor. Part of the enzyme membrane arm which is embedded in the lipid bilayer and involved in proton translocation. The polypeptide is NADH-ubiquinone oxidoreductase chain 4L (MT-ND4L) (Balaenoptera bonaerensis (Antarctic minke whale)).